A 201-amino-acid chain; its full sequence is Potassium-transporting ATPase KdpC subunit (201 aa).

Residues 7 to 29 (PALVLLTALTAITGLAYPLAMTG) form a helical membrane-spanning segment.

It belongs to the KdpC family. In terms of assembly, the system is composed of three essential subunits: KdpA, KdpB and KdpC.

The protein localises to the cell inner membrane. Functionally, part of the high-affinity ATP-driven potassium transport (or Kdp) system, which catalyzes the hydrolysis of ATP coupled with the electrogenic transport of potassium into the cytoplasm. This subunit acts as a catalytic chaperone that increases the ATP-binding affinity of the ATP-hydrolyzing subunit KdpB by the formation of a transient KdpB/KdpC/ATP ternary complex. The chain is Potassium-transporting ATPase KdpC subunit from Methylorubrum populi (strain ATCC BAA-705 / NCIMB 13946 / BJ001) (Methylobacterium populi).